Reading from the N-terminus, the 470-residue chain is Acetyl-CoA decarbonylase/synthase complex subunit gamma 2 (470 aa).

Residues 1–60 (MKINSPLEAYKYLPQTNCGECGQPTCMAFASTLIDRSGKTTDCPPLIKEKKFAKKLAELD) enclose the 4Fe-4S domain. The [4Fe-4S] cluster site is built by C18, C21, C26, and C43.

In terms of assembly, heterodimer of delta and gamma chains. The ACDS complex is made up of alpha, epsilon, beta, gamma and delta chains with a probable stoichiometry of (alpha(2)epsilon(2))(4)-beta(8)-(gamma(1)delta(1))(8). The cofactor is corrinoid. Requires [4Fe-4S] cluster as cofactor.

It carries out the reaction 5,6,7,8-tetrahydrosarcinapterin + methyl-Co(III)-[corrinoid Fe-S protein] = 5-methyltetrahydrosarcinapterin + Co(I)-[corrinoid Fe-S protein] + H(+). It functions in the pathway one-carbon metabolism; methanogenesis from acetate. Functionally, part of a complex that catalyzes the reversible cleavage of acetyl-CoA, allowing growth on acetate as sole source of carbon and energy. This is Acetyl-CoA decarbonylase/synthase complex subunit gamma 2 from Methanosarcina mazei (strain ATCC BAA-159 / DSM 3647 / Goe1 / Go1 / JCM 11833 / OCM 88) (Methanosarcina frisia).